We begin with the raw amino-acid sequence, 59 residues long: UPF0509 protein KPN78578_12530 (59 aa).

The protein belongs to the UPF0509 family.

The chain is UPF0509 protein KPN78578_12530 from Klebsiella pneumoniae subsp. pneumoniae (strain ATCC 700721 / MGH 78578).